The sequence spans 628 residues: Inactive sodium-dependent neutral amino acid transporter B(0)AT3 (628 aa).

Over 1 to 26 the chain is Cytoplasmic; the sequence is MAHAPEPDPAACDLGDERPKWDNKAQ. Residues 27–47 traverse the membrane as a helical segment; the sequence is YLLSCTGFAVGLGNIWRFPYL. Residues 48–51 are Extracellular-facing; that stretch reads CQTY. A helical transmembrane segment spans residues 52 to 74; sequence GGGAFLIPYVIALVFEGIPIFHV. Topologically, residues 75-88 are cytoplasmic; sequence ELAIGQRLRKGSVG. The helical transmembrane segment at 89–111 threads the bilayer; that stretch reads VWTAISPYLSGVGLGCVTLSFLI. Residues 112 to 178 are Extracellular-facing; that stretch reads SLYYNTIVAW…ITADINDSGS (67 aa). N144, N168, and N174 each carry an N-linked (GlcNAc...) asparagine glycan. A helical membrane pass occupies residues 179–201; it reads IQWWLLICLAASWAVVYMCVIRG. Over 202-207 the chain is Cytoplasmic; sequence IETTGK. A helical transmembrane segment spans residues 208 to 230; it reads VIYFTALFPYLVLTIFLIRGLTL. Topologically, residues 231–253 are extracellular; sequence PGATKGLIYLFTPNMHILQNPRV. The chain crosses the membrane as a helical span at residues 254–276; it reads WLDAATQIFFSLSLAFGGHIAFA. At 277–288 the chain is on the cytoplasmic side; sequence SYNSPRNDCQKD. Residues 289-311 form a helical membrane-spanning segment; it reads AVVIALVNRMTSLYASIAVFSVL. The Extracellular segment spans residues 312–399; it reads GFKATNDYEH…TETDLHMPGA (88 aa). N354 is a glycosylation site (N-linked (GlcNAc...) asparagine). Residues 400–422 form a helical membrane-spanning segment; the sequence is PVWAMLFFGMLFTLGLSTMFGTV. Residues 423–442 lie on the Cytoplasmic side of the membrane; it reads EAVITPLLDVGVLPRWVPKE. A helical membrane pass occupies residues 443 to 465; sequence ALTGLVCLVCFLSATCFTLQSGN. Over 466–474 the chain is Extracellular; it reads YWLEIFDNF. The chain crosses the membrane as a helical span at residues 475–497; that stretch reads AASPNLLMLAFLEVVGVVYVYGM. Over 498 to 517 the chain is Cytoplasmic; sequence KRFCDDIAWMTGRRPSPYWR. A helical transmembrane segment spans residues 518–540; the sequence is LTWRVVSPLLLTIFVAYIILLFW. The Extracellular portion of the chain corresponds to 541–568; sequence KPLRYKAWNPKYELFPSRQEKLYPGWAR. A helical membrane pass occupies residues 569 to 591; the sequence is AACVLLSLLPVLWVPVAALAQLL. The Cytoplasmic portion of the chain corresponds to 592-628; that stretch reads TRRRRTWRDRDARPDTDMRPDTDTRPDTDMRPDTDMR. The interval 602 to 628 is disordered; the sequence is DARPDTDMRPDTDTRPDTDMRPDTDMR.

It belongs to the sodium:neurotransmitter symporter (SNF) (TC 2.A.22) family. SLC6A18 subfamily. In terms of tissue distribution, abundantly expressed in kidney, but not in intestine.

The protein localises to the membrane. In terms of biological role, does not show neutral amino acid transporter activity. In Homo sapiens (Human), this protein is Inactive sodium-dependent neutral amino acid transporter B(0)AT3.